A 560-amino-acid polypeptide reads, in one-letter code: DNA ligase B (560 aa).

The active-site N6-AMP-lysine intermediate is the K124.

Belongs to the NAD-dependent DNA ligase family. LigB subfamily.

It catalyses the reaction NAD(+) + (deoxyribonucleotide)n-3'-hydroxyl + 5'-phospho-(deoxyribonucleotide)m = (deoxyribonucleotide)n+m + AMP + beta-nicotinamide D-nucleotide.. Its function is as follows. Catalyzes the formation of phosphodiester linkages between 5'-phosphoryl and 3'-hydroxyl groups in double-stranded DNA using NAD as a coenzyme and as the energy source for the reaction. The chain is DNA ligase B from Escherichia coli O6:K15:H31 (strain 536 / UPEC).